We begin with the raw amino-acid sequence, 801 residues long: tRNA(Met) cytidine acetyltransferase TmcA (801 aa).

Residues Gln228, 256–265 (GRGKSSAVGL), and Arg412 contribute to the ATP site. One can recognise an N-acetyltransferase domain in the interval 457–637 (EELFLKNEEE…YTVIVVKPLS (181 aa)). Acetyl-CoA contacts are provided by residues 562–564 (IAT), 569–575 (MGKGLGS), and Glu602.

The protein belongs to the RNA cytidine acetyltransferase family. TmcA subfamily.

It is found in the cytoplasm. It catalyses the reaction cytidine(34) in elongator tRNA(Met) + acetyl-CoA + ATP + H2O = N(4)-acetylcytidine(34) in elongator tRNA(Met) + ADP + phosphate + CoA + H(+). In terms of biological role, catalyzes the formation of N(4)-acetylcytidine (ac(4)C) at the wobble position of tRNA(Met), by using acetyl-CoA as an acetyl donor and ATP (or GTP). The chain is tRNA(Met) cytidine acetyltransferase TmcA from Thermofilum pendens (strain DSM 2475 / Hrk 5).